Consider the following 453-residue polypeptide: UDP-N-acetylmuramoylalanine--D-glutamate ligase (453 aa).

117-123 (GSNGKST) contributes to the ATP binding site.

Belongs to the MurCDEF family.

The protein resides in the cytoplasm. The catalysed reaction is UDP-N-acetyl-alpha-D-muramoyl-L-alanine + D-glutamate + ATP = UDP-N-acetyl-alpha-D-muramoyl-L-alanyl-D-glutamate + ADP + phosphate + H(+). It participates in cell wall biogenesis; peptidoglycan biosynthesis. In terms of biological role, cell wall formation. Catalyzes the addition of glutamate to the nucleotide precursor UDP-N-acetylmuramoyl-L-alanine (UMA). This is UDP-N-acetylmuramoylalanine--D-glutamate ligase from Chromobacterium violaceum (strain ATCC 12472 / DSM 30191 / JCM 1249 / CCUG 213 / NBRC 12614 / NCIMB 9131 / NCTC 9757 / MK).